Consider the following 382-residue polypeptide: Galactokinase (382 aa).

34-37 (EHTD) is a substrate binding site. 124–130 (GAGLSSS) serves as a coordination point for ATP. S130 and E162 together coordinate Mg(2+). The Proton acceptor role is filled by D174. Substrate is bound at residue Y223.

It belongs to the GHMP kinase family. GalK subfamily.

Its subcellular location is the cytoplasm. The catalysed reaction is alpha-D-galactose + ATP = alpha-D-galactose 1-phosphate + ADP + H(+). The protein operates within carbohydrate metabolism; galactose metabolism. In terms of biological role, catalyzes the transfer of the gamma-phosphate of ATP to D-galactose to form alpha-D-galactose-1-phosphate (Gal-1-P). The chain is Galactokinase from Salmonella heidelberg (strain SL476).